A 438-amino-acid polypeptide reads, in one-letter code: sn-glycerol-3-phosphate-binding periplasmic protein UgpB (438 aa).

A signal peptide spans 1-23 (MKPLHYTASALALGLALMGNAQA). Tyrosine 65, glutamate 89, serine 144, serine 270, glycine 307, tyrosine 346, and arginine 397 together coordinate sn-glycerol 3-phosphate.

This sequence belongs to the bacterial solute-binding protein 1 family. As to quaternary structure, the complex is composed of two ATP-binding proteins (UgpC), two transmembrane proteins (UgpA and UgpE) and a solute-binding protein (UgpB).

Its subcellular location is the periplasm. Functionally, part of the ABC transporter complex UgpBAEC involved in sn-glycerol-3-phosphate (G3P) import. Binds G3P. The polypeptide is sn-glycerol-3-phosphate-binding periplasmic protein UgpB (ugpB) (Escherichia coli O157:H7).